The sequence spans 139 residues: D-ribose pyranase (139 aa).

Histidine 20 serves as the catalytic Proton donor. Substrate is bound by residues aspartate 28, histidine 106, and 128–130 (YAN).

The protein belongs to the RbsD / FucU family. RbsD subfamily. Homodecamer.

It localises to the cytoplasm. It carries out the reaction beta-D-ribopyranose = beta-D-ribofuranose. The protein operates within carbohydrate metabolism; D-ribose degradation; D-ribose 5-phosphate from beta-D-ribopyranose: step 1/2. Its function is as follows. Catalyzes the interconversion of beta-pyran and beta-furan forms of D-ribose. The chain is D-ribose pyranase from Vibrio parahaemolyticus serotype O3:K6 (strain RIMD 2210633).